The sequence spans 242 residues: Probable 2-phosphosulfolactate phosphatase (242 aa).

This sequence belongs to the ComB family. Requires Mg(2+) as cofactor.

The catalysed reaction is (2R)-O-phospho-3-sulfolactate + H2O = (2R)-3-sulfolactate + phosphate. In Parasynechococcus marenigrum (strain WH8102), this protein is Probable 2-phosphosulfolactate phosphatase.